We begin with the raw amino-acid sequence, 395 residues long: Xylose isomerase (395 aa).

Active-site residues include H54 and D57. Residues E181, E217, H220, D245, D255, D257, and D293 each contribute to the Mg(2+) site.

This sequence belongs to the xylose isomerase family. In terms of assembly, homotetramer. Requires Mg(2+) as cofactor.

It localises to the cytoplasm. It carries out the reaction alpha-D-xylose = alpha-D-xylulofuranose. This chain is Xylose isomerase (xylA), found in Arthrobacter sp. (strain NRRL B3728).